The sequence spans 461 residues: Acetylornithine aminotransferase, mitochondrial (461 aa).

The tract at residues 36–56 (YATASQLTHPDPTEDSPSGKM) is disordered. Lys-312 carries the post-translational modification N6-(pyridoxal phosphate)lysine.

The protein belongs to the class-III pyridoxal-phosphate-dependent aminotransferase family. Requires pyridoxal 5'-phosphate as cofactor.

Its subcellular location is the mitochondrion matrix. It catalyses the reaction N(2)-acetyl-L-ornithine + 2-oxoglutarate = N-acetyl-L-glutamate 5-semialdehyde + L-glutamate. Its pathway is amino-acid biosynthesis; L-arginine biosynthesis; N(2)-acetyl-L-ornithine from L-glutamate: step 4/4. The protein is Acetylornithine aminotransferase, mitochondrial (arg-8) of Neurospora crassa (strain ATCC 24698 / 74-OR23-1A / CBS 708.71 / DSM 1257 / FGSC 987).